The following is a 260-amino-acid chain: ATP synthase subunit a (260 aa).

A run of 7 helical transmembrane segments spans residues 29-49 (FSFT…LLLI), 95-115 (FFPC…QGMI), 124-144 (HFLI…IVGF), 151-171 (FFSF…LVLL), 191-211 (MMAG…MLCM), 213-233 (EIFY…LTGL), and 237-257 (VAIL…NDAI).

This sequence belongs to the ATPase A chain family. In terms of assembly, F-type ATPases have 2 components, CF(1) - the catalytic core - and CF(0) - the membrane proton channel. CF(1) has five subunits: alpha(3), beta(3), gamma(1), delta(1), epsilon(1). CF(0) has three main subunits: a, b and c.

The protein resides in the mitochondrion inner membrane. Functionally, mitochondrial membrane ATP synthase (F(1)F(0) ATP synthase or Complex V) produces ATP from ADP in the presence of a proton gradient across the membrane which is generated by electron transport complexes of the respiratory chain. F-type ATPases consist of two structural domains, F(1) - containing the extramembraneous catalytic core and F(0) - containing the membrane proton channel, linked together by a central stalk and a peripheral stalk. During catalysis, ATP synthesis in the catalytic domain of F(1) is coupled via a rotary mechanism of the central stalk subunits to proton translocation. Key component of the proton channel; it may play a direct role in the translocation of protons across the membrane. The sequence is that of ATP synthase subunit a (ATP6) from Brassica napus (Rape).